We begin with the raw amino-acid sequence, 178 residues long: Gamma-crystallin S (178 aa).

S2 is subject to N-acetylserine. The tract at residues 2-5 is N-terminal arm; the sequence is SKSV. 2 consecutive Beta/gamma crystallin 'Greek key' domains span residues 6-44 and 45-87; these read AKIT…RVTG and GAWV…KVIH. A connecting peptide region spans residues 88 to 93; the sequence is LSSGGQ. Beta/gamma crystallin 'Greek key' domains follow at residues 94–134 and 135–177; these read YKLQ…KVLD and GVWV…RRIM.

This sequence belongs to the beta/gamma-crystallin family. In terms of assembly, monomer.

Crystallins are the dominant structural components of the vertebrate eye lens. This is Gamma-crystallin S (CRYGS) from Macropus fuliginosus (Western gray kangaroo).